We begin with the raw amino-acid sequence, 141 residues long: Nucleoside diphosphate kinase (141 aa).

The ATP site is built by K11, F59, R87, T93, R104, and N114. H117 acts as the Pros-phosphohistidine intermediate in catalysis.

The protein belongs to the NDK family. In terms of assembly, homotetramer. It depends on Mg(2+) as a cofactor.

It is found in the cytoplasm. The enzyme catalyses a 2'-deoxyribonucleoside 5'-diphosphate + ATP = a 2'-deoxyribonucleoside 5'-triphosphate + ADP. It carries out the reaction a ribonucleoside 5'-diphosphate + ATP = a ribonucleoside 5'-triphosphate + ADP. Functionally, major role in the synthesis of nucleoside triphosphates other than ATP. The ATP gamma phosphate is transferred to the NDP beta phosphate via a ping-pong mechanism, using a phosphorylated active-site intermediate. The chain is Nucleoside diphosphate kinase from Cupriavidus pinatubonensis (strain JMP 134 / LMG 1197) (Cupriavidus necator (strain JMP 134)).